The chain runs to 399 residues: Elongation factor Tu (399 aa).

Residues 10 to 204 form the tr-type G domain; sequence KPHVNIGTIG…AVDASIPEPE (195 aa). Residues 19–26 form a G1 region; it reads GHVDHGKT. 19–26 provides a ligand contact to GTP; that stretch reads GHVDHGKT. T26 lines the Mg(2+) pocket. Positions 60 to 64 are G2; it reads GITIN. The interval 81–84 is G3; that stretch reads DCPG. Residues 81–85 and 136–139 each bind GTP; these read DCPGH and NKCD. The segment at 136 to 139 is G4; the sequence is NKCD. The interval 174-176 is G5; sequence SGL.

Belongs to the TRAFAC class translation factor GTPase superfamily. Classic translation factor GTPase family. EF-Tu/EF-1A subfamily. Monomer.

Its subcellular location is the cytoplasm. It carries out the reaction GTP + H2O = GDP + phosphate + H(+). Functionally, GTP hydrolase that promotes the GTP-dependent binding of aminoacyl-tRNA to the A-site of ribosomes during protein biosynthesis. The polypeptide is Elongation factor Tu (Synechococcus sp. (strain CC9902)).